We begin with the raw amino-acid sequence, 494 residues long: Cysteine--tRNA ligase (494 aa).

Cysteine 29 is a binding site for Zn(2+). The short motif at 31–41 (VTVYDYCHLGH) is the 'HIGH' region element. Zn(2+)-binding residues include cysteine 216, histidine 241, and glutamate 245. The 'KMSKS' region signature appears at 273–277 (KMSKS). Lysine 276 provides a ligand contact to ATP.

The protein belongs to the class-I aminoacyl-tRNA synthetase family. As to quaternary structure, monomer. The cofactor is Zn(2+).

The protein localises to the cytoplasm. The catalysed reaction is tRNA(Cys) + L-cysteine + ATP = L-cysteinyl-tRNA(Cys) + AMP + diphosphate. The protein is Cysteine--tRNA ligase of Cyanothece sp. (strain PCC 7425 / ATCC 29141).